A 179-amino-acid chain; its full sequence is ATP-dependent protease subunit HslV (179 aa).

Thr7 is a catalytic residue. Na(+) is bound by residues Gly162, Cys165, and Thr168.

The protein belongs to the peptidase T1B family. HslV subfamily. In terms of assembly, a double ring-shaped homohexamer of HslV is capped on each side by a ring-shaped HslU homohexamer. The assembly of the HslU/HslV complex is dependent on binding of ATP.

Its subcellular location is the cytoplasm. It carries out the reaction ATP-dependent cleavage of peptide bonds with broad specificity.. Allosterically activated by HslU binding. Protease subunit of a proteasome-like degradation complex believed to be a general protein degrading machinery. The sequence is that of ATP-dependent protease subunit HslV from Saccharophagus degradans (strain 2-40 / ATCC 43961 / DSM 17024).